A 546-amino-acid chain; its full sequence is MSASASLSAGSDASGPGSPAGDQGNALPQLDSLISHLVAAKRSLSSINHVWRANEIVTSARSALEESVVISARTGFLRRGLNNQLRLLYSVRSEVEEVSLRGRSEFASVLKSLDTADARLRKTLDSLRDTIVHASFRPEGEEPRSLHDFVDERGVEELRAALKSSIDRTNEAQAELDTSNSAFDDELQSIKQALGNYREATKLASSSSSSSSASNSSLPSLSSMPPMLQSLEMHAQEMANLLESLVQHFDLCVTAVKHTEGGGAAARSITGDMPAAVTVSGRGVPNIEQGIHDNLNAPLDPLSESDYQEMVNVLIKDAAEAEDVVMEIQDRIGDMESILENILSQRDVLLSIYNATIGVFRHLSSLATARLPGYIAQAHSFTRVWGEEHDRINGGLADLSDLNTLYDGFLEAYDGLILEVARRRHVRQRVEKVLRETKHKLDQLYEEDVNARETFRVEQGDYLPSDIWPGIGREPMRIEFRRISGGILKGAPPEQPDAQDQPAAEPNEPQSGPSETTEEGEIIPHLPKSLVEEALHRLKARNRQAM.

Positions M1–D22 are enriched in low complexity. Disordered regions lie at residues M1–A26 and A204–P225. 2 coiled-coil regions span residues N312–N341 and R424–E447. Residues I487 to P527 are disordered. The segment covering P496 to P506 has biased composition (low complexity).

This sequence belongs to the ATG17 family.

The protein resides in the cytoplasm. Its subcellular location is the preautophagosomal structure membrane. In terms of biological role, autophagy-specific protein that functions in response to autophagy-inducing signals as a scaffold to recruit other ATG proteins to organize pre-autophagosomal structure (PAS) formation. Modulates the timing and magnitude of the autophagy response, such as the size of the sequestering vesicles. Plays particularly a role in pexophagy and nucleophagy. This is Autophagy-related protein 17 (atg17) from Aspergillus niger (strain ATCC MYA-4892 / CBS 513.88 / FGSC A1513).